Here is a 64-residue protein sequence, read N- to C-terminus: Large ribosomal subunit protein bL35 (64 aa).

Belongs to the bacterial ribosomal protein bL35 family.

This is Large ribosomal subunit protein bL35 from Colwellia psychrerythraea (strain 34H / ATCC BAA-681) (Vibrio psychroerythus).